The sequence spans 296 residues: Tyrosine recombinase XerC (296 aa).

In terms of domain architecture, Core-binding (CB) spans 1–84; it reads MDKIQETFLY…TLRTFYEFWM (84 aa). The 182-residue stretch at 105–286 folds into the Tyr recombinase domain; it reads YLPQFFYEEE…SNQQLRKVYL (182 aa). Active-site residues include Arg145, Lys169, His238, Arg241, and His264. Tyr273 functions as the O-(3'-phospho-DNA)-tyrosine intermediate in the catalytic mechanism.

This sequence belongs to the 'phage' integrase family. XerC subfamily. In terms of assembly, forms a cyclic heterotetrameric complex composed of two molecules of XerC and two molecules of XerD.

It is found in the cytoplasm. Its function is as follows. Site-specific tyrosine recombinase, which acts by catalyzing the cutting and rejoining of the recombining DNA molecules. The XerC-XerD complex is essential to convert dimers of the bacterial chromosome into monomers to permit their segregation at cell division. It also contributes to the segregational stability of plasmids. The chain is Tyrosine recombinase XerC from Staphylococcus epidermidis (strain ATCC 35984 / DSM 28319 / BCRC 17069 / CCUG 31568 / BM 3577 / RP62A).